A 457-amino-acid chain; its full sequence is Charged multivesicular body protein 7 (457 aa).

Coiled coils occupy residues 234–266 (QLQCSEKLLEERVEALGHEAEKCKQQAKSLLKE) and 331–382 (TVER…EKSV). 2 disordered regions span residues 381 to 401 (SVPENDLFPAVPTHPITPPRK) and 435 to 457 (LTVSDKGLPRESVSPQRRLEPAQ).

The protein belongs to the SNF7 family.

The protein localises to the cytoplasm. It localises to the nucleus envelope. ESCRT-III-like protein required to recruit the ESCRT-III complex to the nuclear envelope during late anaphase. Together with SPAST, the ESCRT-III complex promotes nuclear envelope sealing and mitotic spindle disassembly during late anaphase. Plays a role in the endosomal sorting pathway. The chain is Charged multivesicular body protein 7 (chmp7) from Danio rerio (Zebrafish).